We begin with the raw amino-acid sequence, 214 residues long: Large ribosomal subunit protein uL3 (214 aa).

Positions 129–157 are disordered; that stretch reads FGRGPMSHGSKNHRRPGSIGAGTTPGRVF.

The protein belongs to the universal ribosomal protein uL3 family. Part of the 50S ribosomal subunit. Forms a cluster with proteins L14 and L19.

Functionally, one of the primary rRNA binding proteins, it binds directly near the 3'-end of the 23S rRNA, where it nucleates assembly of the 50S subunit. The protein is Large ribosomal subunit protein uL3 of Synechococcus sp. (strain JA-2-3B'a(2-13)) (Cyanobacteria bacterium Yellowstone B-Prime).